Consider the following 524-residue polypeptide: Beta-glucosidase 22 (524 aa).

An N-terminal signal peptide occupies residues 1–24 (MALQKFPLLGLLFLITIVVSSTIA). Residue Gln55 coordinates a beta-D-glucoside. Asn61 is a glycosylation site (N-linked (GlcNAc...) asparagine). Residues His158 and 203–204 (NE) contribute to the a beta-D-glucoside site. Glu204 (proton donor) is an active-site residue. Cys223 and Cys230 form a disulfide bridge. Residues Tyr346, Glu418, Trp468, 475 to 476 (EW), and Phe484 contribute to the a beta-D-glucoside site. Residue Glu418 is the Nucleophile of the active site. The N-linked (GlcNAc...) asparagine glycan is linked to Asn494. A Prevents secretion from ER motif is present at residues 521-524 (KDEL).

It belongs to the glycosyl hydrolase 1 family. Component of the PYK10 complex, at least composed of PYK10/BGLU23, BGLU21, BGLU22, JAL22, JAL23, PBP1/JAL30, PBP2/JAL31, JAL32, JAL33, JAL34, JAL35, GLL22 and GLL23. As to expression, expressed exclusively in roots.

The protein resides in the endoplasmic reticulum lumen. It carries out the reaction Hydrolysis of terminal, non-reducing beta-D-glucosyl residues with release of beta-D-glucose.. With respect to regulation, activated upon binding to PBP1 or PBP2. Functionally, beta-D-glucosidase active on scopolin &gt;&gt; esculin &gt;&gt; 4-MU-glucoside. No activity with DIMBOA-glucoside, pNP-glucoside, oNP-glucoside and sinigrin as substrates. This is Beta-glucosidase 22 from Arabidopsis thaliana (Mouse-ear cress).